We begin with the raw amino-acid sequence, 218 residues long: Ribulose-phosphate 3-epimerase (218 aa).

Ser10 is a binding site for substrate. Residues His35, Asp37, and His68 each coordinate a divalent metal cation. Asp37 functions as the Proton acceptor in the catalytic mechanism. Substrate-binding positions include His68, 144-147 (GFSG), 177-179 (DGG), and 199-200 (GS). Asp177 lines the a divalent metal cation pocket. Residue Asp177 is the Proton donor of the active site.

Belongs to the ribulose-phosphate 3-epimerase family. Requires a divalent metal cation as cofactor.

The catalysed reaction is D-ribulose 5-phosphate = D-xylulose 5-phosphate. Its pathway is carbohydrate degradation. Its function is as follows. Catalyzes the reversible epimerization of D-ribulose 5-phosphate to D-xylulose 5-phosphate. This chain is Ribulose-phosphate 3-epimerase, found in Treponema pallidum (strain Nichols).